A 312-amino-acid polypeptide reads, in one-letter code: Olfactory receptor 14C36 (312 aa).

Residues 1–23 (MPNSTTVMEFLLMRFSDVWTLQI) are Extracellular-facing. N-linked (GlcNAc...) asparagine glycosylation is present at Asn3. Residues 24–44 (LHSASFFMLYLVTLMGNILIV) form a helical membrane-spanning segment. Over 45–52 (TVTTCDSS) the chain is Cytoplasmic. A helical transmembrane segment spans residues 53–73 (LHMPMYFFLRNLSILDACYIS). The Extracellular segment spans residues 74-97 (VTVPTSCVNSLLDSTTISKAGCVA). Cys95 and Cys187 are disulfide-bonded. A helical membrane pass occupies residues 98–118 (QVFLVVFFVYVELLFLTIMAH). Topologically, residues 119-137 (DRYVAVCQPLHYPVIVNSR) are cytoplasmic. The chain crosses the membrane as a helical span at residues 138–158 (ICIQMTLASLLSGLVYAGMHT). The Extracellular segment spans residues 159-194 (GSTFQLPFCRSNVIHQFFCDIPSLLKLSCSDTFSNE). A helical transmembrane segment spans residues 195-215 (VMIVVSALGVGGGCFIFIIRS). Residues 216–235 (YIHIFSTVLGFPRGADRTKA) are Cytoplasmic-facing. The chain crosses the membrane as a helical span at residues 236–256 (FSTCIPHILVVSVFLSSCSSV). At 257–269 (YLRPPAIPAATQD) the chain is on the extracellular side. A helical membrane pass occupies residues 270–290 (LILSGFYSIMPPLFNPIIYSL). Residues 291 to 312 (RNKQIKVAIKKIMKRIFYSENV) are Cytoplasmic-facing.

Belongs to the G-protein coupled receptor 1 family.

The protein localises to the cell membrane. Odorant receptor. This is Olfactory receptor 14C36 (OR14C36) from Homo sapiens (Human).